The sequence spans 413 residues: 1-acylglycerol-3-phosphate O-acyltransferase Pnpla3 (413 aa).

Topologically, residues 1–42 (MYDPERRWSLSFAGCGFLGFYHVGATLCLSERAPHLLRDART) are cytoplasmic. In terms of domain architecture, PNPLA spans 10–179 (LSFAGCGFLG…SDNVPVLDAK (170 aa)). A GXGXXG motif is present at residues 14–19 (GCGFLG). The helical; Signal-anchor for type II membrane protein transmembrane segment at 43-63 (FFGCSAGALHAVTFVCSLPLG) threads the bilayer. Residues 45–49 (GCSAG) carry the GXSXG motif. Serine 47 (nucleophile) is an active-site residue. Residues 64-413 (RIMEILMDLV…HKPQGNSAGL (350 aa)) lie on the Lumenal side of the membrane. The Proton acceptor role is filled by aspartate 166. A DGA/G motif is present at residues 166-168 (DGG). Asparagine 206 and asparagine 209 each carry an N-linked (GlcNAc...) asparagine glycan. The interval 389-413 (KDDHRMLKHGHHPSPHKPQGNSAGL) is disordered. Positions 394–403 (MLKHGHHPSP) are enriched in basic residues.

In terms of tissue distribution, restricted to adipose tissue. Expressed in inguinal and epididymal white adipose tissues and in interscapular brown adipose tissue. Also expressed in liver in response to high-sucrose diet.

The protein resides in the membrane. It localises to the lipid droplet. The catalysed reaction is a 1-acyl-sn-glycero-3-phosphate + an acyl-CoA = a 1,2-diacyl-sn-glycero-3-phosphate + CoA. It carries out the reaction a triacylglycerol + H2O = a diacylglycerol + a fatty acid + H(+). The enzyme catalyses a 1-acylglycerol + a 1,3-diacylglycerol = a triacylglycerol + glycerol. It catalyses the reaction a 1-acylglycerol + a 1,2-diacylglycerol = a triacylglycerol + glycerol. The catalysed reaction is 2 a 1-acylglycerol = a 1,2-diacylglycerol + glycerol. It carries out the reaction 1-(9Z-octadecenoyl)-sn-glycero-3-phosphate + (9Z)-octadecenoyl-CoA = 1,2-di-(9Z-octadecenoyl)-sn-glycero-3-phosphate + CoA. The enzyme catalyses 1-(9Z-octadecenoyl)-sn-glycero-3-phosphate + hexadecanoyl-CoA = 1-(9Z)-octadecenoyl-2-hexadecanoyl-sn-glycero-3-phosphate + CoA. It catalyses the reaction 1-(9Z-octadecenoyl)-sn-glycero-3-phosphate + (9Z,12Z)-octadecadienoyl-CoA = 1-(9Z)-octadecenoyl-2-(9Z,12Z)-octadecadienoyl-sn-glycero-3-phosphate + CoA. The catalysed reaction is 1-(9Z-octadecenoyl)-sn-glycero-3-phosphate + (5Z,8Z,11Z,14Z)-eicosatetraenoyl-CoA = 1-(9Z)-octadecenoyl-2-(5Z,8Z,11Z,14Z)-eicosatetraenoyl-sn-glycero-3-phosphate + CoA. It carries out the reaction 2 1-(9Z-octadecenoyl)-glycerol = 1,2-di-(9Z-octadecenoyl)-glycerol + glycerol. The enzyme catalyses 1-(9Z-octadecenoyl)-glycerol + 1,2-di-(9Z-octadecenoyl)-glycerol = 1,2,3-tri-(9Z-octadecenoyl)-glycerol + glycerol. It catalyses the reaction 1-(9Z-octadecenoyl)-glycerol + 1,3-di-(9Z-octadecenoyl)-glycerol = 1,2,3-tri-(9Z-octadecenoyl)-glycerol + glycerol. The catalysed reaction is 1,2,3-tri-(9Z-octadecenoyl)-glycerol + H2O = 1,3-di-(9Z-octadecenoyl)-glycerol + (9Z)-octadecenoate + H(+). It carries out the reaction a 1,2-diacyl-sn-glycero-3-phosphocholine + H2O = a 1-acyl-sn-glycero-3-phosphocholine + a fatty acid + H(+). The protein operates within phospholipid metabolism. It participates in glycerolipid metabolism. Specifically catalyzes coenzyme A (CoA)-dependent acylation of 1-acyl-sn-glycerol 3-phosphate (2-lysophosphatidic acid/LPA) to generate phosphatidic acid (PA), an important metabolic intermediate and precursor for both triglycerides and glycerophospholipids. Does not esterify other lysophospholipids. Acyl donors are long chain (at least C16) fatty acyl-CoAs: arachidonoyl-CoA, linoleoyl-CoA, oleoyl-CoA and at a lesser extent palmitoyl-CoA. Additionally possesses low triacylglycerol lipase and CoA-independent acylglycerol transacylase activities and thus may play a role in acyl-chain remodeling of triglycerides. In vitro may express hydrolytic activity against glycerolipids triacylglycerol, diacylglycerol and monoacylglycerol, with a strong preference for oleic acid as the acyl moiety. However, the triacylglycerol hydrolase activity is controversial and may be very low. Possesses phospholipase A2 activity. This is 1-acylglycerol-3-phosphate O-acyltransferase Pnpla3 from Mus musculus (Mouse).